The primary structure comprises 66 residues: Large ribosomal subunit protein bL35 (66 aa).

Residues 1–28 (MPKMKTHRGSAKRFKRTGSGKLKRRHGF) are compositionally biased toward basic residues. Positions 1–50 (MPKMKTHRGSAKRFKRTGSGKLKRRHGFTSHMFANKSQKQKRKLRKSAMV) are disordered.

This sequence belongs to the bacterial ribosomal protein bL35 family.

The protein is Large ribosomal subunit protein bL35 of Listeria monocytogenes serotype 4a (strain HCC23).